The following is a 464-amino-acid chain: ATP synthase subunit beta (464 aa).

ATP is bound at residue 153-160 (GGAGVGKT).

The protein belongs to the ATPase alpha/beta chains family. F-type ATPases have 2 components, CF(1) - the catalytic core - and CF(0) - the membrane proton channel. CF(1) has five subunits: alpha(3), beta(3), gamma(1), delta(1), epsilon(1). CF(0) has three main subunits: a(1), b(2) and c(9-12). The alpha and beta chains form an alternating ring which encloses part of the gamma chain. CF(1) is attached to CF(0) by a central stalk formed by the gamma and epsilon chains, while a peripheral stalk is formed by the delta and b chains.

The protein localises to the cell membrane. The enzyme catalyses ATP + H2O + 4 H(+)(in) = ADP + phosphate + 5 H(+)(out). In terms of biological role, produces ATP from ADP in the presence of a proton gradient across the membrane. The catalytic sites are hosted primarily by the beta subunits. This is ATP synthase subunit beta from Clostridium novyi (strain NT).